The primary structure comprises 222 residues: 7-cyano-7-deazaguanine synthase (222 aa).

Position 8 to 18 (8 to 18 (LSGGLDSTTCL)) interacts with ATP. Positions 186, 194, 197, and 200 each coordinate Zn(2+).

The protein belongs to the QueC family. As to quaternary structure, homodimer. Zn(2+) is required as a cofactor.

It catalyses the reaction 7-carboxy-7-deazaguanine + NH4(+) + ATP = 7-cyano-7-deazaguanine + ADP + phosphate + H2O + H(+). The protein operates within purine metabolism; 7-cyano-7-deazaguanine biosynthesis. Its function is as follows. Catalyzes the ATP-dependent conversion of 7-carboxy-7-deazaguanine (CDG) to 7-cyano-7-deazaguanine (preQ(0)). This chain is 7-cyano-7-deazaguanine synthase, found in Acetivibrio thermocellus (strain ATCC 27405 / DSM 1237 / JCM 9322 / NBRC 103400 / NCIMB 10682 / NRRL B-4536 / VPI 7372) (Clostridium thermocellum).